The following is a 297-amino-acid chain: Small ribosomal subunit protein uS2 (297 aa).

The segment at 252–297 (GVPGTAFSAATAAPTSWEADGGDWAASSAAPAGESWAETQPAEAKW) is disordered. Residues 256–289 (TAFSAATAAPTSWEADGGDWAASSAAPAGESWAE) are compositionally biased toward low complexity.

It belongs to the universal ribosomal protein uS2 family. In terms of assembly, component of the small ribosomal subunit. Mature ribosomes consist of a small (40S) and a large (60S) subunit. The 40S subunit contains about 33 different proteins and 1 molecule of RNA (18S). The 60S subunit contains about 49 different proteins and 3 molecules of RNA (25S, 5.8S and 5S). Interacts with rps21.

The protein localises to the cytoplasm. Its function is as follows. Required for the assembly and/or stability of the 40S ribosomal subunit. Required for the processing of the 20S rRNA-precursor to mature 18S rRNA in a late step of the maturation of 40S ribosomal subunits. The chain is Small ribosomal subunit protein uS2 (rps0) from Aspergillus fumigatus (strain CBS 144.89 / FGSC A1163 / CEA10) (Neosartorya fumigata).